We begin with the raw amino-acid sequence, 61 residues long: Large ribosomal subunit protein bL32 (61 aa).

Residues 1 to 44 (MAVQQNRKSRSRRDMRRSHDALTENALTVDQATGETHRRHHVTK) are disordered. Positions 7 to 16 (RKSRSRRDMR) are enriched in basic residues. The segment covering 25-34 (NALTVDQATG) has biased composition (polar residues).

Belongs to the bacterial ribosomal protein bL32 family.

The chain is Large ribosomal subunit protein bL32 from Acinetobacter baumannii (strain AB307-0294).